Consider the following 237-residue polypeptide: (5-formylfuran-3-yl)methyl phosphate synthase (237 aa).

Residue Lys27 is the Schiff-base intermediate with substrate of the active site. Lys85 acts as the Proton acceptor in catalysis.

This sequence belongs to the MfnB family.

The catalysed reaction is 2 D-glyceraldehyde 3-phosphate = 4-(hydroxymethyl)-2-furancarboxaldehyde phosphate + phosphate + 2 H2O. It participates in cofactor biosynthesis; methanofuran biosynthesis. In terms of biological role, catalyzes the formation of 4-(hydroxymethyl)-2-furancarboxaldehyde phosphate (4-HFC-P) from two molecules of glyceraldehyde-3-P (GA-3-P). In Methanobrevibacter smithii (strain ATCC 35061 / DSM 861 / OCM 144 / PS), this protein is (5-formylfuran-3-yl)methyl phosphate synthase.